A 560-amino-acid polypeptide reads, in one-letter code: Formate--tetrahydrofolate ligase (560 aa).

69 to 76 (TPAGEGKS) contacts ATP.

This sequence belongs to the formate--tetrahydrofolate ligase family.

The enzyme catalyses (6S)-5,6,7,8-tetrahydrofolate + formate + ATP = (6R)-10-formyltetrahydrofolate + ADP + phosphate. Its pathway is one-carbon metabolism; tetrahydrofolate interconversion. The chain is Formate--tetrahydrofolate ligase from Listeria monocytogenes serotype 4a (strain HCC23).